The primary structure comprises 381 residues: MALNIRKTHPLLKIVNQTLIDLPAPSNISIWWNFGSLLGLCLIIQIVTGLFLAMHYTADISLAFSSVIHICRDVNYGWLIRNIHANGASLFFVCVYIHIARGLYYGSYLYKETWNIGVILLFLLMATAFVGYVLPWGQMSFWGATVITNLLSAFPYIGDTLVQWIWGGFSVDNATLTRFFAFHFLLPFLITALMVIHVLFLHETGSNNPMGLNSDMDKISFHPYFSYKDALGFLTLLILLGALALFLPNLLGDAENFIPANPLVTPPHIKPEWYFLFAYAILRSIPNKLGGVLALLFSILILLLVPLLHTSKQRSSTFRPLTQVFFWILVTNMLVLTWIGGQPVEQPFILIGQIASITYFSLFLIAMPLAGWWENKILSLN.

4 helical membrane passes run 34–54 (FGSLLGLCLIIQIVTGLFLAM), 78–99 (WLIRNIHANGASLFFVCVYIHI), 114–134 (WNIGVILLFLLMATAFVGYVL), and 179–199 (FFAFHFLLPFLITALMVIHVL). Heme b contacts are provided by His84 and His98. Heme b-binding residues include His183 and His197. Position 202 (His202) interacts with a ubiquinone. The next 4 helical transmembrane spans lie at 227 to 247 (YKDALGFLTLLILLGALALFL), 289 to 309 (LGGVLALLFSILILLLVPLLH), 321 to 341 (LTQVFFWILVTNMLVLTWIGG), and 348 to 368 (FILIGQIASITYFSLFLIAMP).

This sequence belongs to the cytochrome b family. The cytochrome bc1 complex contains 3 respiratory subunits (MT-CYB, CYC1 and UQCRFS1), 2 core proteins (UQCRC1 and UQCRC2) and probably 6 low-molecular weight proteins. It depends on heme b as a cofactor.

Its subcellular location is the mitochondrion inner membrane. Its function is as follows. Component of the ubiquinol-cytochrome c reductase complex (complex III or cytochrome b-c1 complex) that is part of the mitochondrial respiratory chain. The b-c1 complex mediates electron transfer from ubiquinol to cytochrome c. Contributes to the generation of a proton gradient across the mitochondrial membrane that is then used for ATP synthesis. The protein is Cytochrome b (mt-cyb) of Isurus paucus (Longfin mako shark).